The chain runs to 796 residues: Kinesin-like protein KIF3C (796 aa).

The Kinesin motor domain maps to alanine 10–isoleucine 367. Glycine 97–threonine 104 lines the ATP pocket. 3 disordered regions span residues arginine 252–alanine 292, glutamate 397–glycine 422, and lysine 758–aspartate 796. A compositionally biased stretch (low complexity) spans alanine 256–threonine 269. Positions lysine 378 to lysine 632 form a coiled coil. The span at methionine 401 to alanine 416 shows a compositional bias: basic residues. Residues tyrosine 633 to valine 793 are globular.

This sequence belongs to the TRAFAC class myosin-kinesin ATPase superfamily. Kinesin family. Kinesin II subfamily. Heterodimer of KIF3A and KIF3C.

It localises to the cytoplasm. It is found in the cytoskeleton. Functionally, microtubule-based anterograde translocator for membranous organelles. In Mus musculus (Mouse), this protein is Kinesin-like protein KIF3C (Kif3c).